A 578-amino-acid polypeptide reads, in one-letter code: Acyl-CoA ligase AFT1-1 (578 aa).

Residues Ser210–Lys218, Gln350–Thr355, Asp438, Arg457, and Lys554 each bind ATP. Residues Gly281–Gln350 form an SBD1 region. The interval Cys351–Tyr413 is SBD2. The Peroxisomal targeting signal type 1 motif lies at Ser576–Ile578.

This sequence belongs to the ATP-dependent AMP-binding enzyme family.

It is found in the peroxisome. Its pathway is mycotoxin biosynthesis. In terms of biological role, acyl-CoA ligase; part of the gene clusters that mediate the biosynthesis of the host-selective toxins (HSTs) AF-toxins responsible for Alternaria black spot of strawberry disease by the strawberry pathotype. AF-toxin I and III are valine derivatives of 2,3-dyhydroxy-isovaleric acid and 2-hydroxy-isovaleric acid respectively, while AF II is an isoleucine derivative of 2-hydroxy-valeric acid. These derivatives are bound to a 9,10-epoxy-8-hydroxy-9-methyl-decatrienoic acid (EDA) moiety. On cellular level, AF-toxins affect plasma membrane of susceptible cells and cause a sudden increase in loss of K(+) after a few minutes of toxin treatment. The aldo-keto reductase AFTS1 catalyzes the conversion of 2-keto-isovaleric acid (2-KIV) to 2-hydroxy-isovaleric acid (2-HIV) by reduction of its ketone to an alcohol. The acyl-CoA ligase AFT1, the hydrolase AFT2 and the enoyl-CoA hydratases AFT3 and AFT6, but also the polyketide synthase AFT9, the acyl-CoA dehydrogenase AFT10, the cytochrome P450 monooxygenase AFT11 and the oxidoreductase AFT12 are all involved in the biosynthesis of the AK-, AF- and ACT-toxin common EDA structural moiety. The exact role of each enzyme, and of additional enzymes identified within the AF-toxin clusters have still to be determined. The chain is Acyl-CoA ligase AFT1-1 from Alternaria alternata (Alternaria rot fungus).